The sequence spans 198 residues: MATLWGGLLRLGSLLSLSCLALSVLLLAQLSDAAKNFEDVRCKCICPPYKENSGHIYNKNISQKDCDCLHVVEPMPVRGPDVEAYCLRCECKYEERSSVTIKVTIIIYLSILGLLLLYMVYLTLVEPILKRRLFGHAQLIQSDDDIGDHQPFANAHDVLARSRSRANVLNKVEYAQQRWKLQVQEQRKSVFDRHVVLS.

The signal sequence occupies residues 1–33 (MATLWGGLLRLGSLLSLSCLALSVLLLAQLSDA). Residue N60 is glycosylated (N-linked (GlcNAc...) asparagine). The helical transmembrane segment at 105–125 (IIIYLSILGLLLLYMVYLTLV) threads the bilayer. A phosphoserine mark is found at S142 and S189.

This sequence belongs to the TMEM9 family. Post-translationally, N-glycosylated.

It localises to the lysosome membrane. Its subcellular location is the early endosome membrane. Functionally, enhances production of pro-inflammatory cytokines induced by TNF, IL1B, and TLR ligands. Has a role in TNF activation of both the NF-kappaB and MAPK pathways. This chain is Transmembrane protein 9B (TMEM9B), found in Homo sapiens (Human).